The following is a 286-amino-acid chain: Putative L-ribulose-5-phosphate 3-epimerase SgbU (286 aa).

The protein belongs to the L-ribulose-5-phosphate 3-epimerase family.

The catalysed reaction is L-ribulose 5-phosphate = L-xylulose 5-phosphate. Its function is as follows. Catalyzes the isomerization of L-xylulose-5-phosphate to L-ribulose-5-phosphate. The polypeptide is Putative L-ribulose-5-phosphate 3-epimerase SgbU (sgbU) (Haemophilus influenzae (strain ATCC 51907 / DSM 11121 / KW20 / Rd)).